Here is a 297-residue protein sequence, read N- to C-terminus: Small ribosomal subunit biogenesis GTPase RsgA (297 aa).

Positions 65–223 (RNELVRPPVA…VADTPGFSAI (159 aa)) constitute a CP-type G domain. Residues 114–117 (TKVD) and 166–174 (GQSGAGKST) contribute to the GTP site. Residues cysteine 247, cysteine 252, histidine 254, and cysteine 260 each contribute to the Zn(2+) site.

This sequence belongs to the TRAFAC class YlqF/YawG GTPase family. RsgA subfamily. In terms of assembly, monomer. Associates with 30S ribosomal subunit, binds 16S rRNA. The cofactor is Zn(2+).

It localises to the cytoplasm. Its function is as follows. One of several proteins that assist in the late maturation steps of the functional core of the 30S ribosomal subunit. Helps release RbfA from mature subunits. May play a role in the assembly of ribosomal proteins into the subunit. Circularly permuted GTPase that catalyzes slow GTP hydrolysis, GTPase activity is stimulated by the 30S ribosomal subunit. The protein is Small ribosomal subunit biogenesis GTPase RsgA of Enterococcus faecalis (strain ATCC 700802 / V583).